Consider the following 88-residue polypeptide: Small ribosomal subunit protein uS15 (88 aa).

The protein belongs to the universal ribosomal protein uS15 family. Part of the 30S ribosomal subunit. Forms a bridge to the 50S subunit in the 70S ribosome, contacting the 23S rRNA.

Functionally, one of the primary rRNA binding proteins, it binds directly to 16S rRNA where it helps nucleate assembly of the platform of the 30S subunit by binding and bridging several RNA helices of the 16S rRNA. Forms an intersubunit bridge (bridge B4) with the 23S rRNA of the 50S subunit in the ribosome. This chain is Small ribosomal subunit protein uS15, found in Borreliella burgdorferi (strain ATCC 35210 / DSM 4680 / CIP 102532 / B31) (Borrelia burgdorferi).